The chain runs to 274 residues: Penicillin-insensitive murein endopeptidase (274 aa).

Residues Met-1 to Ala-19 form the signal peptide. 3 disulfides stabilise this stretch: Cys-44–Cys-265, Cys-187–Cys-235, and Cys-216–Cys-223. Residues His-110, His-113, Asp-120, Asp-147, His-150, and His-211 each contribute to the Zn(2+) site. The tract at residues Asp-225–Leu-274 is disordered.

It belongs to the peptidase M74 family. In terms of assembly, dimer. Requires Zn(2+) as cofactor.

Its subcellular location is the periplasm. Functionally, murein endopeptidase that cleaves the D-alanyl-meso-2,6-diamino-pimelyl amide bond that connects peptidoglycan strands. Likely plays a role in the removal of murein from the sacculus. This chain is Penicillin-insensitive murein endopeptidase, found in Salmonella choleraesuis (strain SC-B67).